Consider the following 416-residue polypeptide: Alpha-1,3/1,6-mannosyltransferase ALG2 (416 aa).

Over 1–84 (MAEEQGRERD…LPRGLGWGGR (84 aa)) the chain is Cytoplasmic. Residues 85 to 105 (GAAVCAYVRMVFLALYVLFLA) constitute an intramembrane region (helical). Residues 106–416 (DEEFDVVVCD…LYRYVTKLLV (311 aa)) are Cytoplasmic-facing.

This sequence belongs to the glycosyltransferase group 1 family. Glycosyltransferase 4 subfamily.

Its subcellular location is the endoplasmic reticulum membrane. It carries out the reaction a beta-D-Man-(1-&gt;4)-beta-D-GlcNAc-(1-&gt;4)-alpha-D-GlcNAc-diphospho-di-trans,poly-cis-dolichol + GDP-alpha-D-mannose = an alpha-D-Man-(1-&gt;3)-beta-D-Man-(1-&gt;4)-beta-D-GlcNAc-(1-&gt;4)-alpha-D-GlcNAc-diphospho-di-trans,poly-cis-dolichol + GDP + H(+). It catalyses the reaction an alpha-D-Man-(1-&gt;3)-beta-D-Man-(1-&gt;4)-beta-D-GlcNAc-(1-&gt;4)-alpha-D-GlcNAc-diphospho-di-trans,poly-cis-dolichol + GDP-alpha-D-mannose = an alpha-D-Man-(1-&gt;3)-[alpha-D-Man-(1-&gt;6)]-beta-D-Man-(1-&gt;4)-beta-D-GlcNAc-(1-&gt;4)-alpha-D-GlcNAc-diphospho-di-trans,poly-cis-dolichol + GDP + H(+). The catalysed reaction is a beta-D-Man-(1-&gt;4)-beta-D-GlcNAc-(1-&gt;4)-alpha-D-GlcNAc-diphospho-di-trans,poly-cis-dolichol + GDP-alpha-D-mannose = an alpha-D-Man-(1-&gt;6)-beta-D-Man-(1-&gt;4)-beta-D-GlcNAc-(1-&gt;4)-alpha-D-GlcNAc-diphospho-di-trans,poly-cis-dolichol + GDP + H(+). The enzyme catalyses an alpha-D-Man-(1-&gt;6)-beta-D-Man-(1-&gt;4)-beta-D-GlcNAc-(1-&gt;4)-alpha-D-GlcNAc-diphospho-di-trans,poly-cis-dolichol + GDP-alpha-D-mannose = an alpha-D-Man-(1-&gt;3)-[alpha-D-Man-(1-&gt;6)]-beta-D-Man-(1-&gt;4)-beta-D-GlcNAc-(1-&gt;4)-alpha-D-GlcNAc-diphospho-di-trans,poly-cis-dolichol + GDP + H(+). The protein operates within protein modification; protein glycosylation. Mannosyltransferase that operates in the biosynthetic pathway of dolichol-linked oligosaccharides, the glycan precursors employed in protein asparagine (N)-glycosylation. The assembly of dolichol-linked oligosaccharides begins on the cytosolic side of the endoplasmic reticulum membrane and finishes in its lumen. The sequential addition of sugars to dolichol pyrophosphate produces dolichol-linked oligosaccharides containing fourteen sugars, including two GlcNAcs, nine mannoses and three glucoses. Once assembled, the oligosaccharide is transferred from the lipid to nascent proteins by oligosaccharyltransferases. Catalyzes, on the cytoplasmic face of the endoplasmic reticulum, the addition of the second and third mannose residues to the dolichol-linked oligosaccharide chain, to produce Man3GlcNAc(2)-PP-dolichol core oligosaccharide. Man3GlcNAc(2)-PP-dolichol is a substrate for ALG11, the following enzyme in the biosynthetic pathway. While both alpha 1,3 and alpha 1,6 linkages are possible, the sequential addition of alpha 1,3 followed by alpha 1,6 is probably the preferred route. This chain is Alpha-1,3/1,6-mannosyltransferase ALG2 (ALG2), found in Homo sapiens (Human).